Here is a 62-residue protein sequence, read N- to C-terminus: Rubredoxin-2 (62 aa).

The Rubredoxin-like domain occupies 7-58 (MWRCQMVNCGYVYDPDRGDKRRKVPAGTKFEDLPEDWRCPVCGAGKKSFRRL). Fe cation is bound by residues Cys-10, Cys-15, Cys-45, and Cys-48.

This sequence belongs to the rubredoxin family. Monomer. It depends on Fe(3+) as a cofactor.

Rubredoxin is a small nonheme, iron protein lacking acid-labile sulfide. Its single Fe, chelated to 4 Cys, functions as an electron acceptor and may also stabilize the conformation of the molecule. This Desulfovibrio desulfuricans (strain ATCC 27774 / DSM 6949 / MB) protein is Rubredoxin-2 (rd2).